The primary structure comprises 330 residues: GTP 3',8-cyclase (330 aa).

The region spanning 9-225 (RFGRTVNYVR…IRRHHELIPA (217 aa)) is the Radical SAM core domain. Arg18 provides a ligand contact to GTP. [4Fe-4S] cluster contacts are provided by Cys25 and Cys29. Residue Tyr31 coordinates S-adenosyl-L-methionine. Cys32 serves as a coordination point for [4Fe-4S] cluster. Arg67 provides a ligand contact to GTP. Position 71 (Gly71) interacts with S-adenosyl-L-methionine. Residue Thr97 coordinates GTP. An S-adenosyl-L-methionine-binding site is contributed by Ser121. Residue Lys158 coordinates GTP. Met192 contributes to the S-adenosyl-L-methionine binding site. [4Fe-4S] cluster-binding residues include Cys256 and Cys259. Residue 261-263 (RVR) coordinates GTP. Residue Cys273 participates in [4Fe-4S] cluster binding.

This sequence belongs to the radical SAM superfamily. MoaA family. Monomer and homodimer. The cofactor is [4Fe-4S] cluster.

The enzyme catalyses GTP + AH2 + S-adenosyl-L-methionine = (8S)-3',8-cyclo-7,8-dihydroguanosine 5'-triphosphate + 5'-deoxyadenosine + L-methionine + A + H(+). Its pathway is cofactor biosynthesis; molybdopterin biosynthesis. Functionally, catalyzes the cyclization of GTP to (8S)-3',8-cyclo-7,8-dihydroguanosine 5'-triphosphate. This chain is GTP 3',8-cyclase, found in Marinobacter nauticus (strain ATCC 700491 / DSM 11845 / VT8) (Marinobacter aquaeolei).